Reading from the N-terminus, the 585-residue chain is Adenine deaminase (585 aa).

Belongs to the metallo-dependent hydrolases superfamily. Adenine deaminase family. Mn(2+) is required as a cofactor.

The enzyme catalyses adenine + H2O + H(+) = hypoxanthine + NH4(+). This is Adenine deaminase from Halalkalibacterium halodurans (strain ATCC BAA-125 / DSM 18197 / FERM 7344 / JCM 9153 / C-125) (Bacillus halodurans).